The chain runs to 246 residues: Probable transcriptional regulatory protein YebC (246 aa).

Residues 1 to 20 are disordered; it reads MAGHSKWANTRHRKAAQDAK.

Belongs to the TACO1 family.

It localises to the cytoplasm. The sequence is that of Probable transcriptional regulatory protein YebC from Salmonella typhimurium (strain LT2 / SGSC1412 / ATCC 700720).